The primary structure comprises 207 residues: MPLPDFRLIRLLPLAALVLTACSVTTPKGPGKSPDSPQWRQHQQDVRNLNQYQTHGAFAYISDQQKVYARFFWQQTGQDRYRLLLTNPLGSTELELNAQPGNVQLVDNKGQRYTADDAEEMIGKLTGMPIPLNSLRQWILGLPGDATDYKLDDQYRLSEITYSQNGKNWKVVYGGYDTKTHPAMPANMELTDGGQRIKLKMDNWIVK.

The first 21 residues, 1–21, serve as a signal peptide directing secretion; the sequence is MPLPDFRLIRLLPLAALVLTA. A lipid anchor (N-palmitoyl cysteine) is attached at Cys-22. Cys-22 carries the S-diacylglycerol cysteine lipid modification.

This sequence belongs to the LolB family. In terms of assembly, monomer.

The protein localises to the cell outer membrane. Functionally, plays a critical role in the incorporation of lipoproteins in the outer membrane after they are released by the LolA protein. The protein is Outer-membrane lipoprotein LolB of Shigella boydii serotype 18 (strain CDC 3083-94 / BS512).